The following is a 106-amino-acid chain: NADH dehydrogenase [ubiquinone] iron-sulfur protein 5 (106 aa).

The CHCH domain occupies P30–K74. Short sequence motifs (cx9C motif) lie at residues C33–C43 and C56–C66. Disulfide bonds link C33–C66 and C43–C56. Positions E84–S106 are disordered.

Belongs to the complex I NDUFS5 subunit family. Mammalian complex I is composed of 45 different subunits. This is a component of the iron-sulfur (IP) fragment of the enzyme.

Its subcellular location is the mitochondrion inner membrane. The protein resides in the mitochondrion intermembrane space. Functionally, accessory subunit of the mitochondrial membrane respiratory chain NADH dehydrogenase (Complex I), that is believed not to be involved in catalysis. Complex I functions in the transfer of electrons from NADH to the respiratory chain. The immediate electron acceptor for the enzyme is believed to be ubiquinone. This Bos taurus (Bovine) protein is NADH dehydrogenase [ubiquinone] iron-sulfur protein 5 (NDUFS5).